A 143-amino-acid polypeptide reads, in one-letter code: D-aminoacyl-tRNA deacylase (143 aa).

Residues G135–P136 carry the Gly-cisPro motif, important for rejection of L-amino acids motif.

The protein belongs to the DTD family. As to quaternary structure, homodimer.

It localises to the cytoplasm. The catalysed reaction is glycyl-tRNA(Ala) + H2O = tRNA(Ala) + glycine + H(+). It carries out the reaction a D-aminoacyl-tRNA + H2O = a tRNA + a D-alpha-amino acid + H(+). Its function is as follows. An aminoacyl-tRNA editing enzyme that deacylates mischarged D-aminoacyl-tRNAs. Also deacylates mischarged glycyl-tRNA(Ala), protecting cells against glycine mischarging by AlaRS. Acts via tRNA-based rather than protein-based catalysis; rejects L-amino acids rather than detecting D-amino acids in the active site. By recycling D-aminoacyl-tRNA to D-amino acids and free tRNA molecules, this enzyme counteracts the toxicity associated with the formation of D-aminoacyl-tRNA entities in vivo and helps enforce protein L-homochirality. This is D-aminoacyl-tRNA deacylase from Mycobacterium bovis (strain ATCC BAA-935 / AF2122/97).